Reading from the N-terminus, the 564-residue chain is Pyruvate decarboxylase (564 aa).

Pyruvate is bound by residues Asp28 and His115. Residues Thr390 and 413–415 (GSI) each bind thiamine diphosphate. Position 444 (Asp444) interacts with Mg(2+). Residues 445–446 (GS) and 471–476 (NDGYTI) each bind thiamine diphosphate. Mg(2+)-binding residues include Asn471 and Gly473. Glu477 contributes to the pyruvate binding site.

Belongs to the TPP enzyme family. Homotetramer. Mg(2+) is required as a cofactor. Requires thiamine diphosphate as cofactor.

It carries out the reaction a 2-oxocarboxylate + H(+) = an aldehyde + CO2. The catalysed reaction is pyruvate + H(+) = acetaldehyde + CO2. The polypeptide is Pyruvate decarboxylase (PDC1) (Candida glabrata (strain ATCC 2001 / BCRC 20586 / JCM 3761 / NBRC 0622 / NRRL Y-65 / CBS 138) (Yeast)).